We begin with the raw amino-acid sequence, 332 residues long: Probable class II chitinase ARB_00204 (332 aa).

A signal peptide spans 1–18 (MKTPFTILAALTVATTLA). The GH18 domain maps to 19–331 (DVPDEWDIIE…NPHRKYLDSF (313 aa)). Residue E118 is the Proton donor of the active site. Residue N245 is glycosylated (N-linked (GlcNAc...) asparagine).

It belongs to the glycosyl hydrolase 18 family. Chitinase class II subfamily.

It localises to the secreted. The enzyme catalyses Random endo-hydrolysis of N-acetyl-beta-D-glucosaminide (1-&gt;4)-beta-linkages in chitin and chitodextrins.. In terms of biological role, degrades chitin and chitotriose. The protein is Probable class II chitinase ARB_00204 of Arthroderma benhamiae (strain ATCC MYA-4681 / CBS 112371) (Trichophyton mentagrophytes).